The following is a 160-amino-acid chain: Protein MGF 300-2R (160 aa).

The protein belongs to the asfivirus MGF 300 family.

Its function is as follows. Plays a role in virus cell tropism, and may be required for efficient virus replication in macrophages. The protein is Protein MGF 300-2R of African swine fever virus (isolate Tick/South Africa/Pretoriuskop Pr4/1996) (ASFV).